Here is a 223-residue protein sequence, read N- to C-terminus: Peptidyl-prolyl cis-trans isomerase, mitochondrial (223 aa).

Residues 1 to 44 (MFGPRHFSVLKTTGSLVSSTFSSSLKPTATFSCARAFSQTSSIM) constitute a mitochondrion transit peptide. Residues 62–222 (NKPTSEIKAQ…KKPTIVDCGA (161 aa)) enclose the PPIase cyclophilin-type domain.

This sequence belongs to the cyclophilin-type PPIase family.

Its subcellular location is the mitochondrion. It localises to the cytoplasm. The catalysed reaction is [protein]-peptidylproline (omega=180) = [protein]-peptidylproline (omega=0). Binds cyclosporin A (CsA). CsA mediates some of its effects via an inhibitory action on PPIase. Its function is as follows. PPIases accelerate the folding of proteins. It catalyzes the cis-trans isomerization of proline imidic peptide bonds in oligopeptides. This is Peptidyl-prolyl cis-trans isomerase, mitochondrial (csr-1) from Neurospora crassa (strain ATCC 24698 / 74-OR23-1A / CBS 708.71 / DSM 1257 / FGSC 987).